Consider the following 331-residue polypeptide: Adenosine deaminase (331 aa).

The Zn(2+) site is built by His-12 and His-14. The substrate site is built by His-14, Asp-16, and Gly-170. Residue His-197 participates in Zn(2+) binding. Residue Glu-200 is the Proton donor of the active site. Asp-278 contacts Zn(2+). Substrate is bound at residue Asp-279.

Belongs to the metallo-dependent hydrolases superfamily. Adenosine and AMP deaminases family. Adenosine deaminase subfamily. It depends on Zn(2+) as a cofactor.

It carries out the reaction adenosine + H2O + H(+) = inosine + NH4(+). It catalyses the reaction 2'-deoxyadenosine + H2O + H(+) = 2'-deoxyinosine + NH4(+). Functionally, catalyzes the hydrolytic deamination of adenosine and 2-deoxyadenosine. The protein is Adenosine deaminase of Shewanella loihica (strain ATCC BAA-1088 / PV-4).